We begin with the raw amino-acid sequence, 1356 residues long: Partitioning defective 3 homolog (1356 aa).

Ser25 carries the phosphoserine modification. Disordered regions lie at residues Glu81–Ser100 and Ser154–His262. Thr91 carries the phosphothreonine modification. The segment covering Thr91–Ser100 has biased composition (low complexity). Polar residues-rich tracts occupy residues Ser154 to Glu163 and Thr171 to Ser187. Phosphoserine occurs at positions 156 and 174. The segment covering Thr190–Pro203 has biased composition (basic and acidic residues). Residues Arg204–Ala224 show a composition bias toward polar residues. A compositionally biased stretch (basic and acidic residues) spans Asp246–Leu260. Residues Met271 to Pro359 enclose the PDZ 1 domain. Ser383 is subject to Phosphoserine. A disordered region spans residues Leu408–Ser448. 2 consecutive PDZ domains span residues Asn461 to Arg546 and Glu590 to Gln677. At Tyr489 the chain carries Phosphotyrosine. Residues Ser692, Ser695, Ser715, Ser728, Ala792, Ser809, and Ser827 each carry the phosphoserine modification. An interaction with PRKCI and PRKCZ region spans residues Arg712 to Pro936. Lys834 bears the N6-acetyllysine mark. Phosphoserine is present on Ser837. Residue Lys851 is modified to N6-acetyllysine. Residues Ser852 and Ser873 each carry the phosphoserine modification. Disordered stretches follow at residues Thr865–Lys886 and Ser932–Arg1025. At Lys885 the chain carries N6-acetyllysine. Residues Lys935–Ser1356 form an interaction with FRMD4A region. The segment covering Asp939–Glu953 has biased composition (acidic residues). A Phosphoserine; by AURKA modification is found at Ser962. A compositionally biased stretch (polar residues) spans Asp968–Gln982. Residues Ser971 and Ser973 each carry the phosphoserine modification. The span at Glu983–Lys1009 shows a compositional bias: basic and acidic residues. Ser1046 carries the post-translational modification Phosphoserine. The stretch at Ser1049–Glu1077 forms a coiled coil. Residues Gln1129 to Ser1356 form a disordered region. Over residues Ser1136–Ser1149 the composition is skewed to polar residues. Positions Asn1150–Tyr1177 are enriched in basic and acidic residues. Coiled-coil stretches lie at residues His1151 to Arg1174, Val1201 to Leu1224, and Met1280 to Gln1301. The segment covering Ser1196–Arg1205 has biased composition (low complexity). Positions Tyr1221 to Ser1245 are enriched in polar residues. Basic and acidic residues predominate over residues Glu1285–Met1298. The span at Ser1337–Gln1346 shows a compositional bias: polar residues. Over residues Thr1347–Ser1356 the composition is skewed to basic and acidic residues. Lys1350 is subject to N6-acetyllysine.

It belongs to the PAR3 family. Interacts (via PDZ 1 domain) with F11R/JAM1, PARD6A and PARD6B. Interacts with PRCKI and CDH5. Interacts (via PDZ 3 domain) with PTEN (via C-terminus). Part of a complex with PARD6A or PARD6B, PRKCI or PRKCZ and CDC42 or RAC1. Component of a complex whose core is composed of ARHGAP17, AMOT, PALS1, PATJ and PARD3/PAR3. Interacts with LIMK2, AURKA and AURKB. Component of the Par polarity complex, composed of at least phosphorylated PRKCZ, PARD3 and TIAM1. Directly interacts with TIAM1 and TIAM2. Interacts with ECT2, FBF1 and SIRT2. Interacts (via coiled-coil domain) with FRMD4A. Found in a complex with PARD3, CYTH1 and FRMD4A. Interacts with SAPCD2. Interacts with PRKCA. In terms of assembly, interacts with PRKCZ. Post-translationally, acetylated. Deacetylated by SIRT2, thereby inhibiting Schwann cell peripheral myelination. Phosphorylation at Ser-827 by PRKCZ and PRKCI occurs at the most apical tip of epithelial cell-cell contacts during the initial phase of tight junction formation and may promote dissociation of the complex with PARD6. EGF-induced Tyr-1127 phosphorylation mediates dissociation from LIMK2. Phosphorylation by AURKA at Ser-962 is required for the normal establishment of neuronal polarity. As to expression, widely expressed.

The protein localises to the cytoplasm. It localises to the endomembrane system. Its subcellular location is the cell junction. It is found in the tight junction. The protein resides in the adherens junction. The protein localises to the cell membrane. It localises to the cell cortex. Its subcellular location is the cytoskeleton. Its function is as follows. Adapter protein involved in asymmetrical cell division and cell polarization processes. Seems to play a central role in the formation of epithelial tight junctions. Targets the phosphatase PTEN to cell junctions. Involved in Schwann cell peripheral myelination. Association with PARD6B may prevent the interaction of PARD3 with F11R/JAM1, thereby preventing tight junction assembly. The PARD6-PARD3 complex links GTP-bound Rho small GTPases to atypical protein kinase C proteins. Required for establishment of neuronal polarity and normal axon formation in cultured hippocampal neurons. The sequence is that of Partitioning defective 3 homolog from Homo sapiens (Human).